A 1607-amino-acid polypeptide reads, in one-letter code: Dicer-like protein 1 (1607 aa).

Positions 1–74 are disordered; the sequence is MNAEMREGSS…PDTKKWIVND (74 aa). The 183-residue stretch at 142-324 folds into the Helicase ATP-binding domain; the sequence is LFERAKTQNT…IARSPELEGL (183 aa). 155–162 is an ATP binding site; it reads LDTGSGKT. The short motif at 267–270 is the DEAH box element; the sequence is DEAH. A Helicase C-terminal domain is found at 461 to 632; that stretch reads KVVILLRILR…EALPADRKLT (172 aa). Residues 665–755 enclose the Dicer dsRNA-binding fold domain; it reads SLICLAAFVA…RPTFTKQLPA (91 aa). The PAZ domain maps to 905–1040; it reads GAVTFVRDNE…IVLEPLRISP (136 aa). 2 consecutive RNase III domains span residues 1063 to 1219 and 1272 to 1447; these read LVAL…LTAQ and AARF…VDSR. Positions 1312, 1433, and 1436 each coordinate Mg(2+). Residues 1478–1556 enclose the DRBM domain; that stretch reads HPVTFLAGIM…AKKAIQVLEG (79 aa). Residues Cys-1493, His-1527, Cys-1568, and Cys-1570 each coordinate Zn(2+).

The protein belongs to the helicase family. Dicer subfamily. Mg(2+) is required as a cofactor. It depends on Mn(2+) as a cofactor.

Functionally, dicer-like endonuclease involved in cleaving double-stranded RNA in the RNA interference (RNAi) pathway. Produces 21 to 25 bp dsRNAs (siRNAs) which target the selective destruction of homologous RNAs leading to sequence-specific suppression of gene expression, called post-transcriptional gene silencing (PTGS). Part of a broad host defense response against viral infection and transposons. This Chaetomium globosum (strain ATCC 6205 / CBS 148.51 / DSM 1962 / NBRC 6347 / NRRL 1970) (Soil fungus) protein is Dicer-like protein 1 (DCL1).